Reading from the N-terminus, the 352-residue chain is Holliday junction branch migration complex subunit RuvB (352 aa).

The segment at Phe13 to Tyr201 is large ATPase domain (RuvB-L). ATP contacts are provided by residues Arg41, Gly82, Lys85, Thr86, Thr87, Glu148–Phe150, Arg191, Tyr201, and Arg238. Residue Thr86 participates in Mg(2+) binding. Residues Thr202–Gln273 are small ATPAse domain (RuvB-S). Residues Glu276–Phe352 are head domain (RuvB-H). DNA contacts are provided by Arg330 and Arg335.

This sequence belongs to the RuvB family. Homohexamer. Forms an RuvA(8)-RuvB(12)-Holliday junction (HJ) complex. HJ DNA is sandwiched between 2 RuvA tetramers; dsDNA enters through RuvA and exits via RuvB. An RuvB hexamer assembles on each DNA strand where it exits the tetramer. Each RuvB hexamer is contacted by two RuvA subunits (via domain III) on 2 adjacent RuvB subunits; this complex drives branch migration. In the full resolvosome a probable DNA-RuvA(4)-RuvB(12)-RuvC(2) complex forms which resolves the HJ.

It is found in the cytoplasm. The catalysed reaction is ATP + H2O = ADP + phosphate + H(+). In terms of biological role, the RuvA-RuvB-RuvC complex processes Holliday junction (HJ) DNA during genetic recombination and DNA repair, while the RuvA-RuvB complex plays an important role in the rescue of blocked DNA replication forks via replication fork reversal (RFR). RuvA specifically binds to HJ cruciform DNA, conferring on it an open structure. The RuvB hexamer acts as an ATP-dependent pump, pulling dsDNA into and through the RuvAB complex. RuvB forms 2 homohexamers on either side of HJ DNA bound by 1 or 2 RuvA tetramers; 4 subunits per hexamer contact DNA at a time. Coordinated motions by a converter formed by DNA-disengaged RuvB subunits stimulates ATP hydrolysis and nucleotide exchange. Immobilization of the converter enables RuvB to convert the ATP-contained energy into a lever motion, pulling 2 nucleotides of DNA out of the RuvA tetramer per ATP hydrolyzed, thus driving DNA branch migration. The RuvB motors rotate together with the DNA substrate, which together with the progressing nucleotide cycle form the mechanistic basis for DNA recombination by continuous HJ branch migration. Branch migration allows RuvC to scan DNA until it finds its consensus sequence, where it cleaves and resolves cruciform DNA. In Prochlorococcus marinus (strain AS9601), this protein is Holliday junction branch migration complex subunit RuvB.